A 394-amino-acid polypeptide reads, in one-letter code: Ribulose bisphosphate carboxylase large chain (394 aa).

N6,N6,N6-trimethyllysine is present on lysine 5. Substrate is bound by residues asparagine 114 and threonine 164. Lysine 166 (proton acceptor) is an active-site residue. Lysine 168 lines the substrate pocket. Mg(2+) is bound by residues lysine 192, aspartate 194, and glutamate 195. Lysine 192 carries the N6-carboxylysine modification. Histidine 285 serves as the catalytic Proton acceptor. Residues arginine 286, histidine 318, and serine 370 each coordinate substrate.

This sequence belongs to the RuBisCO large chain family. Type I subfamily. Heterohexadecamer of 8 large chains and 8 small chains. Requires Mg(2+) as cofactor.

The protein localises to the plastid. It is found in the chloroplast. The enzyme catalyses 2 (2R)-3-phosphoglycerate + 2 H(+) = D-ribulose 1,5-bisphosphate + CO2 + H2O. It carries out the reaction D-ribulose 1,5-bisphosphate + O2 = 2-phosphoglycolate + (2R)-3-phosphoglycerate + 2 H(+). In terms of biological role, ruBisCO catalyzes two reactions: the carboxylation of D-ribulose 1,5-bisphosphate, the primary event in carbon dioxide fixation, as well as the oxidative fragmentation of the pentose substrate in the photorespiration process. Both reactions occur simultaneously and in competition at the same active site. This chain is Ribulose bisphosphate carboxylase large chain (rbcL), found in Cabomba caroliniana (Carolina fanwort).